We begin with the raw amino-acid sequence, 268 residues long: NH(3)-dependent NAD(+) synthetase (268 aa).

45-52 lines the ATP pocket; that stretch reads GLSGGIDS. Position 51 (aspartate 51) interacts with Mg(2+). Arginine 129 contributes to the deamido-NAD(+) binding site. Threonine 149 provides a ligand contact to ATP. Glutamate 154 contacts Mg(2+). Residues lysine 162 and aspartate 169 each contribute to the deamido-NAD(+) site. Residues lysine 178 and threonine 200 each coordinate ATP. 260–261 serves as a coordination point for deamido-NAD(+); that stretch reads HK.

Belongs to the NAD synthetase family. Homodimer.

The enzyme catalyses deamido-NAD(+) + NH4(+) + ATP = AMP + diphosphate + NAD(+) + H(+). It functions in the pathway cofactor biosynthesis; NAD(+) biosynthesis; NAD(+) from deamido-NAD(+) (ammonia route): step 1/1. In terms of biological role, catalyzes the ATP-dependent amidation of deamido-NAD to form NAD. Uses ammonia as a nitrogen source. This Halobacterium salinarum (strain ATCC 29341 / DSM 671 / R1) protein is NH(3)-dependent NAD(+) synthetase.